The following is a 262-amino-acid chain: Indole-3-glycerol phosphate synthase (262 aa).

Belongs to the TrpC family.

The enzyme catalyses 1-(2-carboxyphenylamino)-1-deoxy-D-ribulose 5-phosphate + H(+) = (1S,2R)-1-C-(indol-3-yl)glycerol 3-phosphate + CO2 + H2O. The protein operates within amino-acid biosynthesis; L-tryptophan biosynthesis; L-tryptophan from chorismate: step 4/5. The protein is Indole-3-glycerol phosphate synthase of Bordetella bronchiseptica (strain ATCC BAA-588 / NCTC 13252 / RB50) (Alcaligenes bronchisepticus).